The primary structure comprises 185 residues: Peptidyl-tRNA hydrolase (185 aa).

Phe14 is a binding site for tRNA. The Proton acceptor role is filled by His19. Positions 64, 66, and 112 each coordinate tRNA.

The protein belongs to the PTH family. In terms of assembly, monomer.

Its subcellular location is the cytoplasm. The catalysed reaction is an N-acyl-L-alpha-aminoacyl-tRNA + H2O = an N-acyl-L-amino acid + a tRNA + H(+). Functionally, hydrolyzes ribosome-free peptidyl-tRNAs (with 1 or more amino acids incorporated), which drop off the ribosome during protein synthesis, or as a result of ribosome stalling. In terms of biological role, catalyzes the release of premature peptidyl moieties from peptidyl-tRNA molecules trapped in stalled 50S ribosomal subunits, and thus maintains levels of free tRNAs and 50S ribosomes. This chain is Peptidyl-tRNA hydrolase, found in Exiguobacterium sp. (strain ATCC BAA-1283 / AT1b).